A 594-amino-acid polypeptide reads, in one-letter code: Probable translation initiation factor IF-2 (594 aa).

The tr-type G domain maps to 3–220; sequence IRSPIVSVLG…MLMGLAQQYL (218 aa). The tract at residues 12-19 is G1; that stretch reads GHVDHGKT. GTP is bound at residue 12-19; the sequence is GHVDHGKT. The tract at residues 37–41 is G2; the sequence is GITQH. A G3 region spans residues 76 to 79; that stretch reads DTPG. Residues 76 to 80 and 130 to 133 contribute to the GTP site; these read DTPGH and NKID. Residues 130-133 are G4; sequence NKID. Positions 198-200 are G5; sequence SAI.

It belongs to the TRAFAC class translation factor GTPase superfamily. Classic translation factor GTPase family. IF-2 subfamily.

In terms of biological role, function in general translation initiation by promoting the binding of the formylmethionine-tRNA to ribosomes. Seems to function along with eIF-2. This Methanothermobacter thermautotrophicus (strain ATCC 29096 / DSM 1053 / JCM 10044 / NBRC 100330 / Delta H) (Methanobacterium thermoautotrophicum) protein is Probable translation initiation factor IF-2 (infB).